Consider the following 368-residue polypeptide: Protein-glutamate methylesterase/protein-glutamine glutaminase (368 aa).

The region spanning 9–126 (KVLVVDDSAF…SINMKELKDE (118 aa)) is the Response regulatory domain. Residue Asp-60 is modified to 4-aspartylphosphate. Residues 161-354 (SVPARIAVAI…ETVVKAVEII (194 aa)) enclose the CheB-type methylesterase domain. Catalysis depends on residues Ser-173, His-200, and Asp-296.

This sequence belongs to the CheB family. In terms of processing, phosphorylated by CheA. Phosphorylation of the N-terminal regulatory domain activates the methylesterase activity.

It localises to the cytoplasm. The catalysed reaction is [protein]-L-glutamate 5-O-methyl ester + H2O = L-glutamyl-[protein] + methanol + H(+). It catalyses the reaction L-glutaminyl-[protein] + H2O = L-glutamyl-[protein] + NH4(+). In terms of biological role, involved in chemotaxis. Part of a chemotaxis signal transduction system that modulates chemotaxis in response to various stimuli. Catalyzes the demethylation of specific methylglutamate residues introduced into the chemoreceptors (methyl-accepting chemotaxis proteins or MCP) by CheR. Also mediates the irreversible deamidation of specific glutamine residues to glutamic acid. The chain is Protein-glutamate methylesterase/protein-glutamine glutaminase from Pyrococcus horikoshii (strain ATCC 700860 / DSM 12428 / JCM 9974 / NBRC 100139 / OT-3).